The chain runs to 305 residues: UDP-3-O-acyl-N-acetylglucosamine deacetylase (305 aa).

Zn(2+)-binding residues include His79, His238, and Asp242. The Proton donor role is filled by His265.

Belongs to the LpxC family. Zn(2+) is required as a cofactor.

The enzyme catalyses a UDP-3-O-[(3R)-3-hydroxyacyl]-N-acetyl-alpha-D-glucosamine + H2O = a UDP-3-O-[(3R)-3-hydroxyacyl]-alpha-D-glucosamine + acetate. It participates in glycolipid biosynthesis; lipid IV(A) biosynthesis; lipid IV(A) from (3R)-3-hydroxytetradecanoyl-[acyl-carrier-protein] and UDP-N-acetyl-alpha-D-glucosamine: step 2/6. Catalyzes the hydrolysis of UDP-3-O-myristoyl-N-acetylglucosamine to form UDP-3-O-myristoylglucosamine and acetate, the committed step in lipid A biosynthesis. This chain is UDP-3-O-acyl-N-acetylglucosamine deacetylase, found in Erwinia tasmaniensis (strain DSM 17950 / CFBP 7177 / CIP 109463 / NCPPB 4357 / Et1/99).